Consider the following 57-residue polypeptide: Large ribosomal subunit protein eL20 (57 aa).

This sequence belongs to the eukaryotic ribosomal protein eL20 family. In terms of assembly, part of the 50S ribosomal subunit. Binds 23S rRNA.

The polypeptide is Large ribosomal subunit protein eL20 (Archaeoglobus fulgidus (strain ATCC 49558 / DSM 4304 / JCM 9628 / NBRC 100126 / VC-16)).